Consider the following 941-residue polypeptide: MSSAPPFAAALAWSGHLRRRLDAHPDLAAWLANACAHPVSANVLAAWQAELSGPDAPEVLPVEQCRGMLRKLRERVFLTLIVRDLGGQADLEEVVGAMTVLADIAVGTAYRSVAAELAAVHGLPREQSTGDPQEMLIVGMGKLGGRELNVSSDIDLVMLYGDEGETDGPRRISNHEFYGRLTRRMMPVLSEVDADGQVFRTDLRLRPDGDAGPLAWSLDALEHYLIGQGREWERYAWLKARLMPAQAFADSNPDAQARQLESLRVPFVYRKYFDFDALAALRALRERIRQDWQRRALARNGVDSANNIKLGDGGIREIEFIVQLSQLIRGGRMPALQRRGLLEALHAERAAGLVPEGDAQKLEAAYRFLRRTEHALQYREDEQTHLLPADPAQRAALAAALGYEPAAFERTLAEHRAFVSQTFRNAFRLAGMGEEDDSPAPARTPANGHGMRPHAGALHDIEERLAGQIQRDFPEHAEDLLRRTETLLGSHRVRSLPDSSRHRLEALLPAALTAAAQTSAPMDAALRLFDLIETIAQRSAYLALLAEYPDTLARVARMVAASPWAAQYLTQHPLLLDSLIDWRTLFEPLDFAQVARQLAADLDACRLPDGEPDIERQMNLMRDVQRQASFQLLAQDLEGELTVEKLADQLSALADLLLAETIRRVWPLVNRRPGAEPHLAVIAYGKLGGKELGYASDLDLVFLFDDDREDAAELYAKLGRRMTSWLSTMTSSGRLYEVDLRLRPDGDAGLLAVSLEAFEQYQRSHAWPWEHQALTRARYAAGDTEAGARFERIRADILVMPRDVQALRGEVLGMRDKISAGHPNRSELFDVKHDRGGMVDVEFVTQYLVLCHAATHRVLVNNLGNIALLRLAGEAGLIPAPLALAAGDAYRTLRRAQHQLRLKGVDKARVPPGQLAAERATVCELWQTVLQDGTIAQAEVK.

The tract at residues 1-431 is adenylyl removase; sequence MSSAPPFAAA…TFRNAFRLAG (431 aa). The interval 447–941 is adenylyl transferase; it reads NGHGMRPHAG…DGTIAQAEVK (495 aa).

This sequence belongs to the GlnE family. Requires Mg(2+) as cofactor.

It catalyses the reaction [glutamine synthetase]-O(4)-(5'-adenylyl)-L-tyrosine + phosphate = [glutamine synthetase]-L-tyrosine + ADP. The catalysed reaction is [glutamine synthetase]-L-tyrosine + ATP = [glutamine synthetase]-O(4)-(5'-adenylyl)-L-tyrosine + diphosphate. Involved in the regulation of glutamine synthetase GlnA, a key enzyme in the process to assimilate ammonia. When cellular nitrogen levels are high, the C-terminal adenylyl transferase (AT) inactivates GlnA by covalent transfer of an adenylyl group from ATP to specific tyrosine residue of GlnA, thus reducing its activity. Conversely, when nitrogen levels are low, the N-terminal adenylyl removase (AR) activates GlnA by removing the adenylyl group by phosphorolysis, increasing its activity. The regulatory region of GlnE binds the signal transduction protein PII (GlnB) which indicates the nitrogen status of the cell. In Bordetella bronchiseptica (strain ATCC BAA-588 / NCTC 13252 / RB50) (Alcaligenes bronchisepticus), this protein is Bifunctional glutamine synthetase adenylyltransferase/adenylyl-removing enzyme.